We begin with the raw amino-acid sequence, 175 residues long: Granulocyte colony-stimulating factor (175 aa).

Disulfide bonds link Cys-37–Cys-43 and Cys-65–Cys-75. A glycan (O-linked (GalNAc...) threonine) is linked at Thr-134.

Belongs to the IL-6 superfamily. In terms of assembly, monomer. O-glycosylated.

The protein localises to the secreted. Its function is as follows. Granulocyte/macrophage colony-stimulating factors are cytokines that act in hematopoiesis by controlling the production, differentiation, and function of 2 related white cell populations of the blood, the granulocytes and the monocytes-macrophages. This CSF induces granulocytes. The chain is Granulocyte colony-stimulating factor (CSF3) from Canis lupus familiaris (Dog).